The chain runs to 171 residues: ATP synthase subunit b (171 aa).

Residues 3-23 traverse the membrane as a helical segment; that stretch reads KFLFFIFVFVGISFAGDDTAT.

Belongs to the ATPase B chain family. F-type ATPases have 2 components, F(1) - the catalytic core - and F(0) - the membrane proton channel. F(1) has five subunits: alpha(3), beta(3), gamma(1), delta(1), epsilon(1). F(0) has three main subunits: a(1), b(2) and c(10-14). The alpha and beta chains form an alternating ring which encloses part of the gamma chain. F(1) is attached to F(0) by a central stalk formed by the gamma and epsilon chains, while a peripheral stalk is formed by the delta and b chains.

It is found in the cell inner membrane. Its function is as follows. F(1)F(0) ATP synthase produces ATP from ADP in the presence of a proton or sodium gradient. F-type ATPases consist of two structural domains, F(1) containing the extramembraneous catalytic core and F(0) containing the membrane proton channel, linked together by a central stalk and a peripheral stalk. During catalysis, ATP synthesis in the catalytic domain of F(1) is coupled via a rotary mechanism of the central stalk subunits to proton translocation. In terms of biological role, component of the F(0) channel, it forms part of the peripheral stalk, linking F(1) to F(0). The polypeptide is ATP synthase subunit b (Campylobacter hominis (strain ATCC BAA-381 / DSM 21671 / CCUG 45161 / LMG 19568 / NCTC 13146 / CH001A)).